A 439-amino-acid chain; its full sequence is Cytochrome b-c1 complex reductase subunit, mitochondrial (439 aa).

A mitochondrion-targeting transit peptide spans 1 to 17; sequence MIRGSSALKSLTSRRLY.

It belongs to the peptidase M16 family. UQCRC1/QCR1 subfamily. As to quaternary structure, component of the ubiquinol-cytochrome c oxidoreductase (cytochrome b-c1 complex, complex III, CIII), a multisubunit enzyme composed of 10 subunits. The complex is composed of 3 respiratory subunits cytochrome b (COB), cytochrome c1 (CYT1) and Rieske protein (RIP1), 2 core protein subunits COR1 and QCR2, and 5 low-molecular weight protein subunits QCR6, QCR7, QCR8, QCR9 and QCR10. The complex exists as an obligatory dimer and forms supercomplexes (SCs) in the inner mitochondrial membrane with a monomer or a dimer of cytochrome c oxidase (complex IV, CIV), resulting in 2 different assemblies (supercomplexes III(2)IV and III(2)IV(2)).

Its subcellular location is the mitochondrion inner membrane. In terms of biological role, component of the ubiquinol-cytochrome c oxidoreductase, a multisubunit transmembrane complex that is part of the mitochondrial electron transport chain which drives oxidative phosphorylation. The complex plays an important role in the uptake of multiple carbon sources present in different host niches. In Candida albicans (strain SC5314 / ATCC MYA-2876) (Yeast), this protein is Cytochrome b-c1 complex reductase subunit, mitochondrial.